Reading from the N-terminus, the 688-residue chain is MSLLLFLLSFLLDGPQGQMESYFLQVQRIVKAQEGLCIFVPCSFSSPEGKWLNRSPLYGYWFKGIRKPSLSFPVATNNKDKVLEWEARGRFQLLGDISKKNCSLLIKDVQWGDSTNYFFRMERGFERFSFKEEFRLQVEALTQKPDIFIPEVLEPGEPVTVVCLFSWTFNQCPAPSFSWMGDAVSFQESRPHTSNYSVLSFIPGLQHHDTELTCQLDFSRMSTQRTVRLRVAYAPRSLAISIFHDNVSVPDLHENPSHLEVQQGQSLRLLCTADSQPPATLSWVLEDQVLSWSSPVGSRTLALELPWVKAGDSGHYTCQAENRLGSQQHTLDLSVLYPPQDLRVTVSQANRTVLEILRNAISLPVLEGQSLCLVCVTYSNPPANVSWAWVTQTLIPIQSSEPGVLELPLVQREHEGEFTCAAQNPLGAQRISLSLSVHYPPQMSSPSCSWEAKGLHCNCSSRAWPAPSLRWRLGEGLLEGNSSNASFTVTFSSLGPWVNSSLSLLQELGPSLWLSCESWNTHGAQTTSVLLLPDKDSATAFSKGAVLGFGITALLALCLIVVIVKTLQKKGTQEEPSRPKLSRGSTILDYINVVPKTRSLARNWKAEPDAPSRSSPLDTHFPKPKKKQKDPHFTYPGCPDPTSSSQVPVSENNPEELHYAALNFSRLRLQETQDPQDTYSDYTEVRVH.

A signal peptide spans 1 to 17 (MSLLLFLLSFLLDGPQG). At 18–543 (QMESYFLQVQ…DKDSATAFSK (526 aa)) the chain is on the extracellular side. The region spanning 26-138 (VQRIVKAQEG…SFKEEFRLQV (113 aa)) is the Ig-like V-type domain. Intrachain disulfides connect Cys-37-Cys-172, Cys-42-Cys-102, and Cys-163-Cys-214. Arg-120 contacts N-acetylneuraminate. The region spanning 145 to 228 (PDIFIPEVLE…SRMSTQRTVR (84 aa)) is the Ig-like C2-type 1 domain. Residues Asn-195 and Asn-246 are each glycosylated (N-linked (GlcNAc...) asparagine). 2 consecutive Ig-like C2-type domains span residues 250-334 (PDLH…LDLS) and 339-436 (PQDL…LSLS). Intrachain disulfides connect Cys-271/Cys-318 and Cys-375/Cys-420. Residues 544 to 564 (GAVLGFGITALLALCLIVVIV) form a helical membrane-spanning segment. Residues 565 to 688 (KTLQKKGTQE…YSDYTEVRVH (124 aa)) lie on the Cytoplasmic side of the membrane. The ITIM motif 1 motif lies at 588 to 593 (LDYINV). A disordered region spans residues 602 to 656 (RNWKAEPDAPSRSSPLDTHFPKPKKKQKDPHFTYPGCPDPTSSSQVPVSENNPEE). The span at 641 to 652 (PTSSSQVPVSEN) shows a compositional bias: polar residues. The ITIM motif 2 signature appears at 657–662 (LHYAAL). Tyr-659 is subject to Phosphotyrosine.

Belongs to the immunoglobulin superfamily. SIGLEC (sialic acid binding Ig-like lectin) family. In terms of assembly, interacts with PTPN6/SHP-1 upon phosphorylation. Interacts with NCF1. Interacts with CD24; the probable CD24:SIGLEC10 complex is proposed to inhibit HGMB1-mediated tissue damage immune response. Interacts with HMGB1; the interaction is dependent on CD24. Associates with membrane IgM on the B cell surface. Interacts with RIGI, CBL and PTPN11. In terms of processing, phosphorylation of Tyr-659 is involved in binding to PTPN6. In terms of tissue distribution, expressed in B cells with high levels in pre-B cells and B1a cells of the peritoneal cavity.

The protein resides in the cell membrane. In terms of biological role, putative adhesion molecule that mediates sialic-acid dependent binding to cells. Preferentially binds to alpha-2,3- or alpha-2,6-linked sialic acid. The sialic acid recognition site may be masked by cis interactions with sialic acids on the same cell surface. In the immune response, seems to act as an inhibitory receptor upon ligand induced tyrosine phosphorylation by recruiting cytoplasmic phosphatase(s) via their SH2 domain(s) that block signal transduction through dephosphorylation of signaling molecules. Involved in negative regulation of B-cell antigen receptor signaling and specifically acts on B1 cells to inhibit Ca(2+) signaling, cellular expansion and antibody secretion. The inhibition of B cell activation is dependent on PTPN6/SHP-1. In association with CD24 may be involved in the selective suppression of the immune response to danger-associated molecular patterns (DAMPs) such as HMGB1, HSP70 and HSP90. In association with CD24 may regulate the immune repsonse of natural killer (NK) cells. Plays a role in the control of autoimmunity. During initiation of adaptive immune responses by CD8-alpha(+) dendritic cells inhibits cross-presentation by impairing the formation of MHC class I-peptide complexes. The function seems to implicate recruitment of PTPN6/SHP-1, which dephosphorylates NCF1 of the NADPH oxidase complex consequently promoting phagosomal acidification. Its function is as follows. (Microbial infection) During infection by RNA viruses inhibits RIG-I signaling in macrophages by promoting its CBL-dependent ubiquitination and degradation via PTPN11/SHP-2. The protein is Sialic acid-binding Ig-like lectin 10 (Siglec10) of Mus musculus (Mouse).